Reading from the N-terminus, the 292-residue chain is Cyclin-dependent kinase 5 (292 aa).

The Protein kinase domain occupies 4–286; that stretch reads YEKLEKIGEG…AEEALQHPYF (283 aa). Residues 10–18 and lysine 33 contribute to the ATP site; that span reads IGEGTYGTV. Tyrosine 15 carries the post-translational modification Phosphotyrosine; by ABL1, EPHA4 and FYN. Phosphothreonine is present on threonine 17. An N6-acetyllysine modification is found at lysine 56. Residue serine 72 is modified to Phosphoserine. Aspartate 126 (proton acceptor) is an active-site residue. Phosphoserine is present on serine 159.

This sequence belongs to the protein kinase superfamily. CMGC Ser/Thr protein kinase family. CDC2/CDKX subfamily. Heterodimer composed of a catalytic subunit CDK5 and a regulatory subunit CDK5R1 (p25) and macromolecular complex composed of at least CDK5, CDK5R1 (p35) and CDK5RAP1 or CDK5RAP2 or CDK5RAP3. Only the heterodimer shows kinase activity. Under neurotoxic stress and neuronal injury conditions, p35 is cleaved by calpain to generate p25 that hyperactivates CDK5, that becomes functionally disabled and often toxic. Found in a trimolecular complex with CABLES1 and ABL1. Interacts with CABLES1 and CABLES2. Interacts with AATK and GSTP1. Binds to HDAC1 when in complex with p25. Interaction with myristoylation p35 promotes CDK5 association with membranes. Both isoforms 1 and 2 interacts with beta-catenin/CTNNB1. Interacts with delta-catenin/CTNND2 and APEX1. Interacts with P53/TP53 in neurons. Interacts with EPHA4; may mediate the activation of NGEF by EPHA4. Interacts with PTK2/FAK1. The complex p35/CDK5 interacts with CLOCK. In terms of processing, phosphorylation on Tyr-15 by ABL1 and FYN, and on Ser-159 by casein kinase 1 promotes kinase activity. By contrast, phosphorylation at Thr-14 inhibits activity. Phosphorylation at Ser-159 is essential for maximal catalytic activity.

It localises to the nucleus. Its subcellular location is the cytoplasm. It is found in the cell membrane. The protein localises to the perikaryon. The protein resides in the cell projection. It localises to the lamellipodium. Its subcellular location is the growth cone. It is found in the postsynaptic density. The protein localises to the synapse. The enzyme catalyses L-seryl-[protein] + ATP = O-phospho-L-seryl-[protein] + ADP + H(+). It carries out the reaction L-threonyl-[protein] + ATP = O-phospho-L-threonyl-[protein] + ADP + H(+). Inhibited by 2-(1-ethyl-2-hydroxyethylamino)-6-benzylamino-9-isopropylpurine (roscovitine), 1-isopropyl-4-aminobenzyl-6-ether-linked benzimidazoles, resveratrol, AT-7519 and olomoucine. Activated by CDK5R1 (p35) and CDK5R2 (p39) during the development of the nervous system; degradation of CDK5R1 (p35) and CDK5R2 (p39) by proteasome result in down regulation of kinase activity, during this process, CDK5 phosphorylates p35 and induces its ubiquitination and subsequent degradation. Kinase activity is mainly determined by the amount of p35 available and subcellular location; reversible association to plasma membrane inhibits activity. Long-term inactivation as well as CDK5R1 (p25)-mediated hyperactivation of CDK5 triggers cell death. The pro-death activity of hyperactivated CDK5 is suppressed by membrane association of CDK5, via myristoylation of p35. Brain-derived neurotrophic factor, glial-derived neurotrophic factor, nerve growth factor (NGF), retinoic acid, laminin and neuregulin promote activity. Neurotoxicity enhances nuclear activity, thus leading to MEF2 phosphorylation and inhibition prior to apoptosis of cortical neurons. Repression by GSTP1 via p25/p35 translocation prevents neurodegeneration. Its function is as follows. Proline-directed serine/threonine-protein kinase essential for neuronal cell cycle arrest and differentiation and may be involved in apoptotic cell death in neuronal diseases by triggering abortive cell cycle re-entry. Interacts with D1 and D3-type G1 cyclins. Phosphorylates SRC, NOS3, VIM/vimentin, p35/CDK5R1, MEF2A, SIPA1L1, SH3GLB1, PXN, PAK1, MCAM/MUC18, SEPT5, SYN1, DNM1, AMPH, SYNJ1, CDK16, RAC1, RHOA, CDC42, TONEBP/NFAT5, MAPT/TAU, MAP1B, histone H1, p53/TP53, HDAC1, APEX1, PTK2/FAK1, huntingtin/HTT, ATM, MAP2, NEFH and NEFM. Regulates several neuronal development and physiological processes including neuronal survival, migration and differentiation, axonal and neurite growth, synaptogenesis, oligodendrocyte differentiation, synaptic plasticity and neurotransmission, by phosphorylating key proteins. Negatively regulates the CACNA1B/CAV2.2 -mediated Ca(2+) release probability at hippocampal neuronal soma and synaptic terminals. Activated by interaction with CDK5R1 (p35) and CDK5R2 (p39), especially in postmitotic neurons, and promotes CDK5R1 (p35) expression in an autostimulation loop. Phosphorylates many downstream substrates such as Rho and Ras family small GTPases (e.g. PAK1, RAC1, RHOA, CDC42) or microtubule-binding proteins (e.g. MAPT/TAU, MAP2, MAP1B), and modulates actin dynamics to regulate neurite growth and/or spine morphogenesis. Also phosphorylates exocytosis associated proteins such as MCAM/MUC18, SEPT5, SYN1, and CDK16/PCTAIRE1 as well as endocytosis associated proteins such as DNM1, AMPH and SYNJ1 at synaptic terminals. In the mature central nervous system (CNS), regulates neurotransmitter movements by phosphorylating substrates associated with neurotransmitter release and synapse plasticity; synaptic vesicle exocytosis, vesicles fusion with the presynaptic membrane, and endocytosis. Promotes cell survival by activating anti-apoptotic proteins BCL2 and STAT3, and negatively regulating of JNK3/MAPK10 activity. Phosphorylation of p53/TP53 in response to genotoxic and oxidative stresses enhances its stabilization by preventing ubiquitin ligase-mediated proteasomal degradation, and induces transactivation of p53/TP53 target genes, thus regulating apoptosis. Phosphorylation of p35/CDK5R1 enhances its stabilization by preventing calpain-mediated proteolysis producing p25/CDK5R1 and avoiding ubiquitin ligase-mediated proteasomal degradation. During aberrant cell-cycle activity and DNA damage, p25/CDK5 activity elicits cell-cycle activity and double-strand DNA breaks that precedes neuronal death by deregulating HDAC1. DNA damage triggered phosphorylation of huntingtin/HTT in nuclei of neurons protects neurons against polyglutamine expansion as well as DNA damage mediated toxicity. Phosphorylation of PXN reduces its interaction with PTK2/FAK1 in matrix-cell focal adhesions (MCFA) during oligodendrocytes (OLs) differentiation. Negative regulator of Wnt/beta-catenin signaling pathway. Activator of the GAIT (IFN-gamma-activated inhibitor of translation) pathway, which suppresses expression of a post-transcriptional regulon of proinflammatory genes in myeloid cells; phosphorylates the linker domain of glutamyl-prolyl tRNA synthetase (EPRS) in a IFN-gamma-dependent manner, the initial event in assembly of the GAIT complex. Phosphorylation of SH3GLB1 is required for autophagy induction in starved neurons. Phosphorylation of TONEBP/NFAT5 in response to osmotic stress mediates its rapid nuclear localization. MEF2 is inactivated by phosphorylation in nucleus in response to neurotoxin, thus leading to neuronal apoptosis. APEX1 AP-endodeoxyribonuclease is repressed by phosphorylation, resulting in accumulation of DNA damage and contributing to neuronal death. NOS3 phosphorylation down regulates NOS3-derived nitrite (NO) levels. SRC phosphorylation mediates its ubiquitin-dependent degradation and thus leads to cytoskeletal reorganization. May regulate endothelial cell migration and angiogenesis via the modulation of lamellipodia formation. Involved in dendritic spine morphogenesis by mediating the EFNA1-EPHA4 signaling. The complex p35/CDK5 participates in the regulation of the circadian clock by modulating the function of CLOCK protein: phosphorylates CLOCK at 'Thr-451' and 'Thr-461' and regulates the transcriptional activity of the CLOCK-BMAL1 heterodimer in association with altered stability and subcellular distribution. This Bos taurus (Bovine) protein is Cyclin-dependent kinase 5.